The following is a 98-amino-acid chain: NADH-ubiquinone oxidoreductase chain 4L (98 aa).

Transmembrane regions (helical) follow at residues 1–21 (MPVV…GLLI), 29–49 (SLLC…VTVL), and 61–81 (IILL…LVMV).

Belongs to the complex I subunit 4L family. In terms of assembly, core subunit of respiratory chain NADH dehydrogenase (Complex I) which is composed of 45 different subunits.

The protein localises to the mitochondrion inner membrane. It carries out the reaction a ubiquinone + NADH + 5 H(+)(in) = a ubiquinol + NAD(+) + 4 H(+)(out). Its function is as follows. Core subunit of the mitochondrial membrane respiratory chain NADH dehydrogenase (Complex I) which catalyzes electron transfer from NADH through the respiratory chain, using ubiquinone as an electron acceptor. Part of the enzyme membrane arm which is embedded in the lipid bilayer and involved in proton translocation. The chain is NADH-ubiquinone oxidoreductase chain 4L (MT-ND4L) from Ursus maritimus (Polar bear).